Here is an 884-residue protein sequence, read N- to C-terminus: Formin-like protein 9 (884 aa).

The first 19 residues, 1 to 19, serve as a signal peptide directing secretion; sequence MGMAMRCVLVLFSVSPVLL. A helical transmembrane segment spans residues 140–160; the sequence is IVALGVVGLCLVVLGVVIAAF. 3 disordered regions span residues 179-204, 295-318, and 403-473; these read FHHGSRDQRSPAATRKVSSHPSPDPL, THDSPSDSSYQSLSPDCTSRLSPK, and TMTN…PLPR. Residues 300–310 are compositionally biased toward low complexity; that stretch reads SDSSYQSLSPD. Residues 429-443 are compositionally biased toward pro residues; that stretch reads KPAPPPPPQKNPPPN. The FH2 domain occupies 464-884; that stretch reads VGKDGSPLPR…QTLNLVLPLK (421 aa).

The protein belongs to the formin-like family. Class-I subfamily.

Its subcellular location is the membrane. The chain is Formin-like protein 9 (FH9) from Oryza sativa subsp. indica (Rice).